We begin with the raw amino-acid sequence, 506 residues long: Acrylate reductase flavoprotein subunit (506 aa).

A signal peptide (tat-type signal) is located at residues 1–30 (MSNKDLLGRRNFIKGMGAAAGVAMAAPALA). The FAD site is built by Ala54, Glu74, Asn82, Gly87, and Gly88. Residue Arg333 is the Proton donor of the active site. 2 residues coordinate FAD: Glu473 and Ile489.

It belongs to the FAD-dependent oxidoreductase 2 family. FRD/SDH subfamily. As to quaternary structure, the ArdAB flavocytochrome c is composed of a FAD-containing subunit (ArdA) and a heme c-containing subunit (ArdB). The cofactor is FAD. Predicted to be exported by the Tat system. The position of the signal peptide cleavage has not been experimentally proven.

The protein resides in the periplasm. Methacrylate acts as a competitive inhibitor of the acrylate reductase activity and suppresses the reductase activity in dose-dependent manner. Functionally, FAD-containing subunit of the ArdAB flavocytochrome c, which catalyzes the reduction of acrylate to propanoate and supports dimethylsulfoniopropionate-dependent anaerobic respiration. In vitro, can use the artificial electron donor methyl viologen. The natural electron donor is probably a low-potential cytochrome c. Also shows weak activity toward methacrylate in vitro (at a 22-fold lower rate) but cannot use other tested 2-enoates, including crotonic, fumaric, sorbic, urocanic, cinnamic, p-coumaric, caffeic or ferulic acids. The protein catalyzes a unidirectional reaction and cannot oxidize propanoate with phenazine metasulfate and dichlorophenolindophenol as electron acceptors. This Shewanella woodyi (strain ATCC 51908 / MS32) protein is Acrylate reductase flavoprotein subunit.